A 344-amino-acid chain; its full sequence is Biotin synthase (344 aa).

Residues 40–267 (AEVQVSTLLS…KSMVRLSAGR (228 aa)) form the Radical SAM core domain. [4Fe-4S] cluster-binding residues include cysteine 55, cysteine 59, and cysteine 62. Positions 99, 130, 190, and 262 each coordinate [2Fe-2S] cluster.

It belongs to the radical SAM superfamily. Biotin synthase family. Homodimer. Requires [4Fe-4S] cluster as cofactor. The cofactor is [2Fe-2S] cluster.

It carries out the reaction (4R,5S)-dethiobiotin + (sulfur carrier)-SH + 2 reduced [2Fe-2S]-[ferredoxin] + 2 S-adenosyl-L-methionine = (sulfur carrier)-H + biotin + 2 5'-deoxyadenosine + 2 L-methionine + 2 oxidized [2Fe-2S]-[ferredoxin]. It functions in the pathway cofactor biosynthesis; biotin biosynthesis; biotin from 7,8-diaminononanoate: step 2/2. Catalyzes the conversion of dethiobiotin (DTB) to biotin by the insertion of a sulfur atom into dethiobiotin via a radical-based mechanism. This chain is Biotin synthase, found in Xanthomonas campestris pv. campestris (strain 8004).